The sequence spans 308 residues: tRNA pseudouridine synthase B (308 aa).

Residue D47 is the Nucleophile of the active site.

Belongs to the pseudouridine synthase TruB family. Type 1 subfamily.

The enzyme catalyses uridine(55) in tRNA = pseudouridine(55) in tRNA. Functionally, responsible for synthesis of pseudouridine from uracil-55 in the psi GC loop of transfer RNAs. This chain is tRNA pseudouridine synthase B, found in Xanthomonas campestris pv. campestris (strain B100).